Consider the following 1399-residue polypeptide: DNA-directed RNA polymerase subunit beta' (1399 aa).

4 residues coordinate Zn(2+): Cys-71, Cys-73, Cys-86, and Cys-89. Mg(2+) is bound by residues Asp-462, Asp-464, and Asp-466. Residues Cys-810, Cys-884, Cys-891, and Cys-894 each coordinate Zn(2+). The segment at 1376–1399 is disordered; it reads EREKQAAITPAAPEAEPLALPPAE.

It belongs to the RNA polymerase beta' chain family. In terms of assembly, the RNAP catalytic core consists of 2 alpha, 1 beta, 1 beta' and 1 omega subunit. When a sigma factor is associated with the core the holoenzyme is formed, which can initiate transcription. Mg(2+) serves as cofactor. Requires Zn(2+) as cofactor.

It catalyses the reaction RNA(n) + a ribonucleoside 5'-triphosphate = RNA(n+1) + diphosphate. DNA-dependent RNA polymerase catalyzes the transcription of DNA into RNA using the four ribonucleoside triphosphates as substrates. The protein is DNA-directed RNA polymerase subunit beta' of Afipia carboxidovorans (strain ATCC 49405 / DSM 1227 / KCTC 32145 / OM5) (Oligotropha carboxidovorans).